The following is a 737-amino-acid chain: Autolysin (737 aa).

Over residues 1–13 the composition is skewed to basic and acidic residues; the sequence is MKKESMSRIERRK. Disordered regions lie at residues 1-28, 51-132, and 335-360; these read MKKE…KKST, AEAT…TDSS, and PSSG…SGTN. Residues 1–53 form the signal peptide; that stretch reads MKKESMSRIERRKAQQRKKTPVQWKKSTTLFSSALIVSSVGTPVALLPVTAEA. The span at 67 to 117 shows a compositional bias: low complexity; it reads PTTETGLVETPTTETTPGTTEQPTTDSSTTTESTTESSKETPTTPSTEQPT. The span at 118 to 132 shows a compositional bias: polar residues; it reads ADSTTPVESGTTDSS. Residues 339–352 are compositionally biased toward gly residues; the sequence is GNTGGGTVNPGTGG. Positions 361-404 constitute a LysM 1 domain; it reads TYYTVKSGDTLNKIAAQYGVSVANLRSWNGISGDLIFVGQKLIV. The disordered stretch occupies residues 409 to 429; the sequence is SGNTGGSGSGGSNNNQSGTNT. Residues 410-419 are compositionally biased toward gly residues; it reads GNTGGSGSGG. The span at 420 to 429 shows a compositional bias: low complexity; it reads SNNNQSGTNT. LysM domains are found at residues 429–472, 497–540, 565–608, 631–674, and 693–736; these read TYYT…KLIV, TYYT…KIIV, TSYT…TIIV, and KRHT…TLKV.

This sequence belongs to the glycosyl hydrolase 73 family.

Its subcellular location is the secreted. Its function is as follows. Hydrolyzes the cell wall of E.faecalis and M.lysodeikticus. May play an important role in cell wall growth and cell separation. This chain is Autolysin, found in Enterococcus faecalis (strain ATCC 700802 / V583).